The sequence spans 485 residues: tRNA sulfurtransferase (485 aa).

In terms of domain architecture, THUMP spans 63–167 (DKLVERLSCM…NELLYLVTAI (105 aa)). ATP-binding positions include 185–186 (LI), K267, G289, and Q298. C346 and C458 are disulfide-bonded. One can recognise a Rhodanese domain in the interval 406-485 (LAENEVILDI…FNNIKVYRQN (80 aa)). C458 (cysteine persulfide intermediate) is an active-site residue.

This sequence belongs to the ThiI family.

The protein localises to the cytoplasm. It catalyses the reaction [ThiI sulfur-carrier protein]-S-sulfanyl-L-cysteine + a uridine in tRNA + 2 reduced [2Fe-2S]-[ferredoxin] + ATP + H(+) = [ThiI sulfur-carrier protein]-L-cysteine + a 4-thiouridine in tRNA + 2 oxidized [2Fe-2S]-[ferredoxin] + AMP + diphosphate. The catalysed reaction is [ThiS sulfur-carrier protein]-C-terminal Gly-Gly-AMP + S-sulfanyl-L-cysteinyl-[cysteine desulfurase] + AH2 = [ThiS sulfur-carrier protein]-C-terminal-Gly-aminoethanethioate + L-cysteinyl-[cysteine desulfurase] + A + AMP + 2 H(+). It functions in the pathway cofactor biosynthesis; thiamine diphosphate biosynthesis. Functionally, catalyzes the ATP-dependent transfer of a sulfur to tRNA to produce 4-thiouridine in position 8 of tRNAs, which functions as a near-UV photosensor. Also catalyzes the transfer of sulfur to the sulfur carrier protein ThiS, forming ThiS-thiocarboxylate. This is a step in the synthesis of thiazole, in the thiamine biosynthesis pathway. The sulfur is donated as persulfide by IscS. This chain is tRNA sulfurtransferase, found in Tolumonas auensis (strain DSM 9187 / NBRC 110442 / TA 4).